A 101-amino-acid chain; its full sequence is UPF0473 protein MGAS10750_Spy1887 (101 aa).

It belongs to the UPF0473 family.

The protein is UPF0473 protein MGAS10750_Spy1887 of Streptococcus pyogenes serotype M4 (strain MGAS10750).